Here is a 409-residue protein sequence, read N- to C-terminus: LL-diaminopimelate aminotransferase (409 aa).

Residues tyrosine 15 and glycine 42 each contribute to the substrate site. Residues tyrosine 72, 108-109 (AK), tyrosine 132, asparagine 186, tyrosine 217, and 245-247 (SFS) each bind pyridoxal 5'-phosphate. Substrate is bound by residues lysine 109, tyrosine 132, and asparagine 186. At lysine 248 the chain carries N6-(pyridoxal phosphate)lysine. Residues arginine 256 and asparagine 291 each contribute to the pyridoxal 5'-phosphate site. The substrate site is built by asparagine 291 and arginine 386.

It belongs to the class-I pyridoxal-phosphate-dependent aminotransferase family. LL-diaminopimelate aminotransferase subfamily. In terms of assembly, homodimer. Requires pyridoxal 5'-phosphate as cofactor.

It catalyses the reaction (2S,6S)-2,6-diaminopimelate + 2-oxoglutarate = (S)-2,3,4,5-tetrahydrodipicolinate + L-glutamate + H2O + H(+). Its pathway is amino-acid biosynthesis; L-lysine biosynthesis via DAP pathway; LL-2,6-diaminopimelate from (S)-tetrahydrodipicolinate (aminotransferase route): step 1/1. Its function is as follows. Involved in the synthesis of meso-diaminopimelate (m-DAP or DL-DAP), required for both lysine and peptidoglycan biosynthesis. Catalyzes the direct conversion of tetrahydrodipicolinate to LL-diaminopimelate. In Desulforapulum autotrophicum (strain ATCC 43914 / DSM 3382 / VKM B-1955 / HRM2) (Desulfobacterium autotrophicum), this protein is LL-diaminopimelate aminotransferase.